The sequence spans 243 residues: Transmembrane protein 174 (243 aa).

2 helical membrane passes run 40–60 (LLFSGIFLGLVGITFTVMGWI) and 73–93 (LLGPILLSVGVTFILISVCKF). The disordered stretch occupies residues 205 to 229 (AGHDRPSSDADQLEGTQMGEEERVC).

In terms of assembly, interacts with SLC34A1; regulates SLC34A1 internalization by PTH and FGF23.

It localises to the endoplasmic reticulum membrane. It is found in the apical cell membrane. In terms of biological role, regulator of plasma phosphate homeostasis. Decreases serum inorganic phosphate (Pi) uptake by regulating the sodium-phosphate cotransporter SLC34A1 trafficking by PTH and FGF23 in the kidney. This Rattus norvegicus (Rat) protein is Transmembrane protein 174 (Tmem174).